A 458-amino-acid chain; its full sequence is Cysteine protease ATG4C (458 aa).

N-acetylmethionine is present on Met-1. Cys-111 acts as the Nucleophile in catalysis. Catalysis depends on residues Asp-345 and His-347. Position 451 is a phosphoserine (Ser-451). A Phosphothreonine modification is found at Thr-452.

This sequence belongs to the peptidase C54 family.

It is found in the cytoplasm. The enzyme catalyses [protein]-C-terminal L-amino acid-glycyl-phosphatidylethanolamide + H2O = [protein]-C-terminal L-amino acid-glycine + a 1,2-diacyl-sn-glycero-3-phosphoethanolamine. Inhibited by N-ethylmaleimide. Its function is as follows. Cysteine protease that plays a key role in autophagy by mediating both proteolytic activation and delipidation of ATG8 family proteins. The protease activity is required for proteolytic activation of ATG8 family proteins: cleaves the C-terminal amino acid of ATG8 proteins MAP1LC3 and GABARAPL2, to reveal a C-terminal glycine. Exposure of the glycine at the C-terminus is essential for ATG8 proteins conjugation to phosphatidylethanolamine (PE) and insertion to membranes, which is necessary for autophagy. In addition to the protease activity, also mediates delipidation of ATG8 family proteins. Catalyzes delipidation of PE-conjugated forms of ATG8 proteins during macroautophagy. Compared to ATG4B, the major protein for proteolytic activation of ATG8 proteins, shows weaker ability to cleave the C-terminal amino acid of ATG8 proteins, while it displays stronger delipidation activity. In contrast to other members of the family, weakly or not involved in phagophore growth during mitophagy. This Homo sapiens (Human) protein is Cysteine protease ATG4C.